A 535-amino-acid chain; its full sequence is Secreted lipase 5 (535 aa).

Residues 1-17 (MHLKSLLLAALPLLLEA) form the signal peptide. N32 and N119 each carry an N-linked (GlcNAc...) asparagine glycan. Catalysis depends on S241, which acts as the Acyl-ester intermediate. Residues N282, N341, N347, and N432 are each glycosylated (N-linked (GlcNAc...) asparagine).

This sequence belongs to the type-B carboxylesterase/lipase family.

It localises to the secreted. It catalyses the reaction a carboxylic ester + H2O = an alcohol + a carboxylate + H(+). Its function is as follows. Secreted lipase involved in plant virulence. Has a substrate preference for p-nitrophenyl esters with a carbon chain length of C8 (p-nitrophenyl caprylate). This is Secreted lipase 5 from Gibberella zeae (strain ATCC MYA-4620 / CBS 123657 / FGSC 9075 / NRRL 31084 / PH-1) (Wheat head blight fungus).